Reading from the N-terminus, the 206-residue chain is Tumor protein D54 (206 aa).

N-acetylmethionine is present on Met-1. Over residues 1–14 the composition is skewed to polar residues; it reads MDSAGQDINLNSPN. Positions 1–24 are disordered; that stretch reads MDSAGQDINLNSPNKGLLSDSMTD. Residues Ser-3, Ser-12, Ser-19, and Ser-21 each carry the phosphoserine modification. The stretch at 38-82 forms a coiled coil; sequence VEGLTEAEEEELRAELTKVEEEIVTLRQVLAAKERHCGELKRRLG. Ser-96, Ser-149, and Ser-161 each carry phosphoserine. Thr-163 carries the post-translational modification Phosphothreonine. Ser-166 carries the post-translational modification Phosphoserine. Phosphothreonine is present on Thr-173. Over residues 175–185 the composition is skewed to basic and acidic residues; sequence KSKVVGDRENG. The disordered stretch occupies residues 175-206; sequence KSKVVGDRENGSDSLPSSAGSGDKPLSDPAPF. Phosphoserine is present on residues Ser-192 and Ser-195.

Belongs to the TPD52 family. Forms a homodimer or heterodimer with other members of the family. Interacts with MAL2.

The protein is Tumor protein D54 (TPD52L2) of Pongo abelii (Sumatran orangutan).